The following is a 612-amino-acid chain: Threonine--tRNA ligase (612 aa).

The catalytic stretch occupies residues 218-509 (DHRKLGVELG…LSEHFGGNFP (292 aa)). 3 residues coordinate Zn(2+): cysteine 310, histidine 361, and histidine 486.

Belongs to the class-II aminoacyl-tRNA synthetase family. Homodimer. Requires Zn(2+) as cofactor.

It localises to the cytoplasm. The enzyme catalyses tRNA(Thr) + L-threonine + ATP = L-threonyl-tRNA(Thr) + AMP + diphosphate + H(+). Functionally, catalyzes the attachment of threonine to tRNA(Thr) in a two-step reaction: L-threonine is first activated by ATP to form Thr-AMP and then transferred to the acceptor end of tRNA(Thr). Also edits incorrectly charged L-seryl-tRNA(Thr). This chain is Threonine--tRNA ligase, found in Helicobacter pylori (strain G27).